The following is a 423-amino-acid chain: Kynurenine--oxoglutarate transaminase 1 (423 aa).

Gly36 contacts substrate. Lys82 bears the N6-succinyllysine mark. Asn185 serves as a coordination point for substrate. At Lys247 the chain carries N6-(pyridoxal phosphate)lysine. Arg398 is a substrate binding site.

The protein belongs to the class-I pyridoxal-phosphate-dependent aminotransferase family. Homodimer. It depends on pyridoxal 5'-phosphate as a cofactor. In terms of tissue distribution, detected in kidney.

Its subcellular location is the cytoplasm. It localises to the cytosol. It is found in the mitochondrion matrix. The enzyme catalyses L-kynurenine + 2-oxoglutarate = kynurenate + L-glutamate + H2O. The catalysed reaction is 3-phenylpyruvate + L-glutamine = 2-oxoglutaramate + L-phenylalanine. It carries out the reaction an S-substituted L-cysteine + H2O = a thiol + pyruvate + NH4(+). It participates in amino-acid degradation; L-kynurenine degradation; kynurenate from L-kynurenine: step 1/2. Inhibited by aminooxyacetate (in vitro). In terms of biological role, catalyzes the irreversible transamination of the L-tryptophan metabolite L-kynurenine to form kynurenic acid (KA), an intermediate in the tryptophan catabolic pathway which is also a broad spectrum antagonist of the three ionotropic excitatory amino acid receptors among others. Metabolizes the cysteine conjugates of certain halogenated alkenes and alkanes to form reactive metabolites. Catalyzes the beta-elimination of S-conjugates and Se-conjugates of L-(seleno)cysteine, resulting in the cleavage of the C-S or C-Se bond. The polypeptide is Kynurenine--oxoglutarate transaminase 1 (Rattus norvegicus (Rat)).